Here is an 849-residue protein sequence, read N- to C-terminus: Protein translocase subunit SecA (849 aa).

ATP is bound by residues glutamine 85, 103–107 (GEGKT), and aspartate 493. Residues cysteine 832, cysteine 834, cysteine 843, and histidine 844 each contribute to the Zn(2+) site.

The protein belongs to the SecA family. As to quaternary structure, monomer and homodimer. Part of the essential Sec protein translocation apparatus which comprises SecA, SecYEG and auxiliary proteins SecDF. Other proteins may also be involved. It depends on Zn(2+) as a cofactor.

It is found in the cell membrane. The protein localises to the cytoplasm. The enzyme catalyses ATP + H2O + cellular proteinSide 1 = ADP + phosphate + cellular proteinSide 2.. In terms of biological role, part of the Sec protein translocase complex. Interacts with the SecYEG preprotein conducting channel. Has a central role in coupling the hydrolysis of ATP to the transfer of proteins into and across the cell membrane, serving as an ATP-driven molecular motor driving the stepwise translocation of polypeptide chains across the membrane. This Streptococcus thermophilus (strain ATCC BAA-250 / LMG 18311) protein is Protein translocase subunit SecA.